The sequence spans 246 residues: LexA repressor (246 aa).

The disordered stretch occupies residues 1 to 34 (MATPQTGKKTPSRRVSELPDGPPDATGLTPRQQR). The H-T-H motif DNA-binding region spans 52 to 72 (MREIGEAVGLTSSSSVAHQLK). Active-site for autocatalytic cleavage activity residues include Ser-170 and Lys-207.

It belongs to the peptidase S24 family. In terms of assembly, homodimer.

It carries out the reaction Hydrolysis of Ala-|-Gly bond in repressor LexA.. In terms of biological role, represses a number of genes involved in the response to DNA damage (SOS response), including recA and lexA. In the presence of single-stranded DNA, RecA interacts with LexA causing an autocatalytic cleavage which disrupts the DNA-binding part of LexA, leading to derepression of the SOS regulon and eventually DNA repair. This Nocardioides sp. (strain ATCC BAA-499 / JS614) protein is LexA repressor.